The sequence spans 229 residues: Potassium/proton antiporter CemA (229 aa).

3 helical membrane-spanning segments follow: residues 7-27 (FTPLLYLASLVFLPWWISLSF), 114-134 (IICFVILSGYSIWGNEELVIL), and 189-209 (ILSGLVSTFPVILDTLFKFWI).

It belongs to the CemA family.

It localises to the plastid. Its subcellular location is the chloroplast inner membrane. It catalyses the reaction K(+)(in) + H(+)(out) = K(+)(out) + H(+)(in). Contributes to K(+)/H(+) antiport activity by supporting proton efflux to control proton extrusion and homeostasis in chloroplasts in a light-dependent manner to modulate photosynthesis. Prevents excessive induction of non-photochemical quenching (NPQ) under continuous-light conditions. Indirectly promotes efficient inorganic carbon uptake into chloroplasts. The protein is Potassium/proton antiporter CemA of Panax ginseng (Korean ginseng).